We begin with the raw amino-acid sequence, 55 residues long: AHIITDECISCGACAAECPVEAIHEGTGKYEVDADTCIDCGACEAVCPTGAVKAE.

4Fe-4S ferredoxin-type domains are found at residues 2-27 (HIIT…HEGT) and 28-55 (GKYE…VKAE). Residues Cys-8, Cys-11, Cys-14, Cys-18, Cys-37, Cys-40, Cys-43, and Cys-47 each contribute to the [4Fe-4S] cluster site.

The cofactor is [4Fe-4S] cluster.

Functionally, ferredoxins are iron-sulfur proteins that transfer electrons in a wide variety of metabolic reactions. The chain is Ferredoxin from Thermoanaerobacterium thermosaccharolyticum (Clostridium thermosaccharolyticum).